Here is a 326-residue protein sequence, read N- to C-terminus: Ribose-phosphate pyrophosphokinase 4 (326 aa).

4 residues coordinate Mg(2+): D140, H142, H151, and D155.

Belongs to the ribose-phosphate pyrophosphokinase family.

It localises to the cytoplasm. The enzyme catalyses D-ribose 5-phosphate + ATP = 5-phospho-alpha-D-ribose 1-diphosphate + AMP + H(+). It functions in the pathway metabolic intermediate biosynthesis; 5-phospho-alpha-D-ribose 1-diphosphate biosynthesis; 5-phospho-alpha-D-ribose 1-diphosphate from D-ribose 5-phosphate (route I): step 1/1. In terms of biological role, 5-phosphoribose 1-diphosphate synthase involved in nucleotide, histidine, and tryptophan biosynthesis. Active in heteromultimeric complexes with other 5-phosphoribose 1-diphosphate synthases (PRS2, PRS3, PRS4 and PRS5). This is Ribose-phosphate pyrophosphokinase 4 (PRS4) from Saccharomyces cerevisiae (strain ATCC 204508 / S288c) (Baker's yeast).